A 193-amino-acid chain; its full sequence is Ancillary SecYEG translocon subunit (193 aa).

Over 1–11 the chain is Cytoplasmic; it reads MIKNSYINEKL. A helical membrane pass occupies residues 12–34; that stretch reads NFYQKSFLTCMLLIVIVIVYFFS. Residues 35–193 lie on the Extracellular side of the membrane; the sequence is KNYLDKPKNS…IIQMKINNYN (159 aa).

It belongs to the YfgM family. In terms of assembly, interacts with the Sec translocon. Forms a complex with PpiD.

It localises to the cell membrane. In terms of biological role, may mediate protein transfer from the Sec translocon to the chaperone network via its extracellular C-terminal region. The chain is Ancillary SecYEG translocon subunit from Buchnera aphidicola subsp. Baizongia pistaciae (strain Bp).